The sequence spans 397 residues: ATP-dependent RNA helicase eIF4A (397 aa).

A Q motif motif is present at residues 23–51; the sequence is YKFDDLNLKPNIVRGIFGYGYETPSAIQQ. The Helicase ATP-binding domain maps to 54–224; sequence ILPITEGRDV…TKFMNNPVRI (171 aa). Residue 67-74 coordinates ATP; it reads AQSGTGKT. Positions 172–175 match the DEAD box motif; it reads DEAD. One can recognise a Helicase C-terminal domain in the interval 255–396; that stretch reads DLYDSISVTQ…EMPADIGSLF (142 aa).

This sequence belongs to the DEAD box helicase family. eIF4A subfamily. Component of the eIF4F complex, which composition varies with external and internal environmental conditions. It is composed of at least eIF4A, eIF4E and eIF4G.

It is found in the cytoplasm. It carries out the reaction ATP + H2O = ADP + phosphate + H(+). Functionally, ATP-dependent RNA helicase which is a subunit of the eIF4F complex involved in cap recognition and is required for mRNA binding to ribosome. In the current model of translation initiation, eIF4A unwinds RNA secondary structures in the 5'-UTR of mRNAs which is necessary to allow efficient binding of the small ribosomal subunit, and subsequent scanning for the initiator codon. In Lodderomyces elongisporus (strain ATCC 11503 / CBS 2605 / JCM 1781 / NBRC 1676 / NRRL YB-4239) (Yeast), this protein is ATP-dependent RNA helicase eIF4A (TIF1).